Here is a 364-residue protein sequence, read N- to C-terminus: Methylthioribose-1-phosphate isomerase (364 aa).

Substrate is bound by residues 53–55 (RGA), R90, and Q203. The active-site Proton donor is D244. 254–255 (NK) serves as a coordination point for substrate.

Belongs to the eIF-2B alpha/beta/delta subunits family. MtnA subfamily.

It catalyses the reaction 5-(methylsulfanyl)-alpha-D-ribose 1-phosphate = 5-(methylsulfanyl)-D-ribulose 1-phosphate. It functions in the pathway amino-acid biosynthesis; L-methionine biosynthesis via salvage pathway; L-methionine from S-methyl-5-thio-alpha-D-ribose 1-phosphate: step 1/6. Catalyzes the interconversion of methylthioribose-1-phosphate (MTR-1-P) into methylthioribulose-1-phosphate (MTRu-1-P). The sequence is that of Methylthioribose-1-phosphate isomerase from Rhizobium meliloti (strain 1021) (Ensifer meliloti).